Reading from the N-terminus, the 1393-residue chain is MNELMKIFGQVSGTQAFDQIKISIASPEKIRSWSFGEIKKPETINYRTFKPERDGLFCARIFGPIKDYECLCGKYKRMKYRGIICEKCGVEVTLSKVRRERMGHIELAAPVAHIWFMKSLPSRVGLLIDMTLKDLERVLYFENYVVVEPGLTPLKLHEMLSEEQYQRAVEEYGEDSFTAGIGAEAIRDMLMSIDLETLKTDMKVELRDTTSEAKRKKLVKRLKIVDAFIESGCRPEWMILEVIPVIPPELRPLVPLDGGRFATSDLNDLYRRVINRNNRLKRLIELRAPDIIIRNEKRMLQESVDALFDNGRRGRAITGANKRPLKSLSDMLKGKQGRFRQNLLGKRVDYSGRSVIVVGPELKLHQCGLPKKMALELFKPFVYSKLEQYHYATTIKAAKRMVEKERPEVWDILEEVIREHPVMLNRAPTLHRLGIQAFEPVLIEGKAIQLHPLVCTAFNADFDGDQMAVHVPLSLEAQLEARVLMMSTNNILSPANGKPIIVPTQDIVLGLYYLTLDREGEKGEGMAFASLNEIEHALQARVVSLQARVKARLHTIDENGAPVIRTVETTPGRMLLSRLLPRHTALPFSVINRLLRKKDITDVIDTVYRHCGQKETVIFCDRVMQLGYAHAARAGISFGKDDLVIPPTKAQLVADTDAEVKEFEQQYQDGLITQGEKYNKVVDAWSHCTERVADEMMKEIAKIEPGKPVNSVYMMAHSGARGSAAQMKQLAGMRGLMAKPSGEIIETPIVSNFKEGLTVLEYFNSTHGARKGLADTALKTANSGYLTRRLVDVAQDAIIVIEDCGTSRGITAMPVVEGGQIIASLGERVLGRTAAEDIKDTDGTIIVPLGKMIEEHDVELLEEAGIEQVRIRSVLTCEAETGICGKCYGRDLARGTKVNIGEAVGVIAAQSIGEPGTQLTMRTFHIGGAAQRGAEQSSVEAAFDGKIVMENRAVVGTSENVLIVMSRNCEVKITDEAGREKARYRIPYGSKLLTDEGRMVTKGDRLAEWDPYTVPIITEREGIAIYNDLVEGVSVREVTDEATGISSKVVVEWKNMPKGTDLKPRITLRDDRGEGITLANGLEARYFMSVDTILSVENGQRVKAGDVLGRIPREGSKTRDITGGLPRVAELFEARKPKDHAIISEIDGRVEFGKDYKSKRRLLVVPEDGDPVEYLLPKGKHLTIQEGDYVRKGDPLMDGNPVPHDILRVMGVEALANYLIKEIQDVYRLQGVKINDKHIEVISRQMLQKVEITEPGDTTFLVGELIDRTDFQIENEKTLKENGRPANSIPVLQGITKASLQTHSFISAASFQETTRVLTEAAVSGKSDSLMGLKENVIVGRLIPAGTGAMMNRLRALAATRDKEIEDSRGAEMVPVLGAAESFTPRLPEPPAE.

Positions 70, 72, 85, and 88 each coordinate Zn(2+). Residues Asp-461, Asp-463, and Asp-465 each contribute to the Mg(2+) site. Zn(2+) is bound by residues Cys-804, Cys-877, Cys-884, and Cys-887.

This sequence belongs to the RNA polymerase beta' chain family. In terms of assembly, the RNAP catalytic core consists of 2 alpha, 1 beta, 1 beta' and 1 omega subunit. When a sigma factor is associated with the core the holoenzyme is formed, which can initiate transcription. The cofactor is Mg(2+). It depends on Zn(2+) as a cofactor.

The enzyme catalyses RNA(n) + a ribonucleoside 5'-triphosphate = RNA(n+1) + diphosphate. Functionally, DNA-dependent RNA polymerase catalyzes the transcription of DNA into RNA using the four ribonucleoside triphosphates as substrates. This chain is DNA-directed RNA polymerase subunit beta', found in Rhodospirillum rubrum (strain ATCC 11170 / ATH 1.1.1 / DSM 467 / LMG 4362 / NCIMB 8255 / S1).